A 323-amino-acid chain; its full sequence is Tyrosine recombinase XerD (323 aa).

The Core-binding (CB) domain maps to 21–106 (AEDDQAIQRF…TLRGFYALCL (86 aa)). A Tyr recombinase domain is found at 127 to 317 (SLPKALTESQ…ARQHLQTLHA (191 aa)). Catalysis depends on residues Arg167, Lys191, His269, Arg272, and His295. The active-site O-(3'-phospho-DNA)-tyrosine intermediate is the Tyr304.

This sequence belongs to the 'phage' integrase family. XerD subfamily. Forms a cyclic heterotetrameric complex composed of two molecules of XerC and two molecules of XerD.

The protein localises to the cytoplasm. In terms of biological role, site-specific tyrosine recombinase, which acts by catalyzing the cutting and rejoining of the recombining DNA molecules. The XerC-XerD complex is essential to convert dimers of the bacterial chromosome into monomers to permit their segregation at cell division. It also contributes to the segregational stability of plasmids. This is Tyrosine recombinase XerD from Xanthomonas campestris pv. campestris (strain ATCC 33913 / DSM 3586 / NCPPB 528 / LMG 568 / P 25).